We begin with the raw amino-acid sequence, 269 residues long: 5'-nucleotidase SurE (269 aa).

4 residues coordinate a divalent metal cation: Asp11, Asp12, Ser43, and Asn101.

The protein belongs to the SurE nucleotidase family. A divalent metal cation is required as a cofactor.

The protein resides in the cytoplasm. It catalyses the reaction a ribonucleoside 5'-phosphate + H2O = a ribonucleoside + phosphate. In terms of biological role, nucleotidase that shows phosphatase activity on nucleoside 5'-monophosphates. In Synechococcus sp. (strain WH7803), this protein is 5'-nucleotidase SurE.